The sequence spans 331 residues: tRNA N6-adenosine threonylcarbamoyltransferase (331 aa).

Fe cation is bound by residues His109, His113, and Tyr130. Substrate contacts are provided by residues 130-134, Asp162, Asp183, and Ser262; that span reads YLSGG. Residue Asp290 participates in Fe cation binding.

This sequence belongs to the KAE1 / TsaD family. Fe(2+) serves as cofactor.

It is found in the cytoplasm. It carries out the reaction L-threonylcarbamoyladenylate + adenosine(37) in tRNA = N(6)-L-threonylcarbamoyladenosine(37) in tRNA + AMP + H(+). Functionally, required for the formation of a threonylcarbamoyl group on adenosine at position 37 (t(6)A37) in tRNAs that read codons beginning with adenine. Is probably involved in the transfer of the threonylcarbamoyl moiety of threonylcarbamoyl-AMP (TC-AMP) to the N6 group of A37. The polypeptide is tRNA N6-adenosine threonylcarbamoyltransferase (Saccharolobus islandicus (strain M.16.27) (Sulfolobus islandicus)).